A 486-amino-acid polypeptide reads, in one-letter code: MSLHEINENVKLAREYALLGNYSSAIVCYRGVLEQIKKYLFTVRDSSFQQKWQQVWQEINEENNQVQEIMRTLESFQLETTPSKPPSNQDGINDIWPVQVERRSSPLPVRRPPVPYKDSKPHNNRLSVAGVRAQHRQSPRGANGDRAKPLKGKEKKEAKPKDDKNKAEVSEKEVKRFDGQGYDKDLIEALERDIISQNPNVKWDDIADLEEAKKLLKEAVVLPMWMPEFFKGIRRPWKGVLMVGPPGTGKTLLAKAVATECRTTFFNVSSSTLTSKYRGESEKLVRILFEMARFYAPTTIFIDEIDSMCSRRGTSEEHEASRRVKAELLVQMDGVGGASDNEDPSKMVMVLAATNFPWDIDEALRRRLEKRIYIPLPSAKGRVELLRINLKELELANDVDMAKIAEQSEGYSGADITNVCRDASLMAMRRRIEGLTPEEIRNISRAEMHMPTTMEDFESSLKKVSKSVSASDLEKYEKWIEEFGSC.

The disordered stretch occupies residues 103 to 174; sequence RSSPLPVRRP…NKAEVSEKEV (72 aa). A compositionally biased stretch (basic and acidic residues) spans 143-174; the sequence is NGDRAKPLKGKEKKEAKPKDDKNKAEVSEKEV. 244-251 contacts ATP; the sequence is GPPGTGKT.

Belongs to the AAA ATPase family. Katanin p60 subunit A1 subfamily. As to quaternary structure, can homooligomerize into hexameric rings, which may be promoted by interaction with microtubules. Interacts with katnb1, which may serve as a targeting subunit.

The protein localises to the cytoplasm. It is found in the cytoskeleton. It localises to the microtubule organizing center. The protein resides in the centrosome. Its subcellular location is the spindle pole. The protein localises to the spindle. It carries out the reaction n ATP + n H2O + a microtubule = n ADP + n phosphate + (n+1) alpha/beta tubulin heterodimers.. Its activity is regulated as follows. ATPase activity is stimulated by microtubules, which promote homooligomerization. ATP-dependent microtubule severing is stimulated by interaction with katnb1. In terms of biological role, catalytic subunit of a complex which severs microtubules in an ATP-dependent manner. Microtubule severing may promote rapid reorganization of cellular microtubule arrays and the release of microtubules from the centrosome following nucleation. The polypeptide is Katanin p60 ATPase-containing subunit A1 (katna1) (Salmo salar (Atlantic salmon)).